The sequence spans 459 residues: tRNA modification GTPase MnmE (459 aa).

(6S)-5-formyl-5,6,7,8-tetrahydrofolate-binding residues include Arg-23, Glu-88, and Arg-127. Positions 223–381 (GLNTVIVGKP…FKEVIKELFF (159 aa)) constitute a TrmE-type G domain. Asn-233 lines the K(+) pocket. Residues 233-238 (NVGKSS), 252-258 (TDVPGTT), and 277-280 (DTAG) each bind GTP. Position 237 (Ser-237) interacts with Mg(2+). The K(+) site is built by Thr-252, Val-254, and Thr-257. A Mg(2+)-binding site is contributed by Thr-258. Lys-459 is a binding site for (6S)-5-formyl-5,6,7,8-tetrahydrofolate.

Belongs to the TRAFAC class TrmE-Era-EngA-EngB-Septin-like GTPase superfamily. TrmE GTPase family. In terms of assembly, homodimer. Heterotetramer of two MnmE and two MnmG subunits. K(+) serves as cofactor.

Its subcellular location is the cytoplasm. Exhibits a very high intrinsic GTPase hydrolysis rate. Involved in the addition of a carboxymethylaminomethyl (cmnm) group at the wobble position (U34) of certain tRNAs, forming tRNA-cmnm(5)s(2)U34. This chain is tRNA modification GTPase MnmE, found in Clostridium novyi (strain NT).